The chain runs to 195 residues: Imidazoleglycerol-phosphate dehydratase (195 aa).

Belongs to the imidazoleglycerol-phosphate dehydratase family.

The protein localises to the cytoplasm. It catalyses the reaction D-erythro-1-(imidazol-4-yl)glycerol 3-phosphate = 3-(imidazol-4-yl)-2-oxopropyl phosphate + H2O. It participates in amino-acid biosynthesis; L-histidine biosynthesis; L-histidine from 5-phospho-alpha-D-ribose 1-diphosphate: step 6/9. The chain is Imidazoleglycerol-phosphate dehydratase from Burkholderia multivorans (strain ATCC 17616 / 249).